The following is a 97-amino-acid chain: Aspartyl/glutamyl-tRNA(Asn/Gln) amidotransferase subunit C (97 aa).

Belongs to the GatC family. In terms of assembly, heterotrimer of A, B and C subunits.

It carries out the reaction L-glutamyl-tRNA(Gln) + L-glutamine + ATP + H2O = L-glutaminyl-tRNA(Gln) + L-glutamate + ADP + phosphate + H(+). The enzyme catalyses L-aspartyl-tRNA(Asn) + L-glutamine + ATP + H2O = L-asparaginyl-tRNA(Asn) + L-glutamate + ADP + phosphate + 2 H(+). Allows the formation of correctly charged Asn-tRNA(Asn) or Gln-tRNA(Gln) through the transamidation of misacylated Asp-tRNA(Asn) or Glu-tRNA(Gln) in organisms which lack either or both of asparaginyl-tRNA or glutaminyl-tRNA synthetases. The reaction takes place in the presence of glutamine and ATP through an activated phospho-Asp-tRNA(Asn) or phospho-Glu-tRNA(Gln). In Anaeromyxobacter sp. (strain K), this protein is Aspartyl/glutamyl-tRNA(Asn/Gln) amidotransferase subunit C.